Here is a 301-residue protein sequence, read N- to C-terminus: Glycine--tRNA ligase alpha subunit (301 aa).

This sequence belongs to the class-II aminoacyl-tRNA synthetase family. In terms of assembly, tetramer of two alpha and two beta subunits.

It localises to the cytoplasm. It carries out the reaction tRNA(Gly) + glycine + ATP = glycyl-tRNA(Gly) + AMP + diphosphate. The polypeptide is Glycine--tRNA ligase alpha subunit (Shewanella oneidensis (strain ATCC 700550 / JCM 31522 / CIP 106686 / LMG 19005 / NCIMB 14063 / MR-1)).